The primary structure comprises 817 residues: Rho GTPase-activating protein gacII (817 aa).

One can recognise a Rho-GAP domain in the interval 20–204 (TTIVKIGTPK…TLIEEFQYIS (185 aa)). The SH3 domain maps to 238 to 298 (EDYLIAKANT…SQTYVDIIDI (61 aa)). Residues 318–339 (ASTILHTPPTSSSSSSSSSSSS) show a composition bias toward low complexity. 3 disordered regions span residues 318–638 (ASTI…NIPV), 691–771 (LGGQ…QQQQ), and 783–817 (LPPQNTNLSGKNLQRSSTSMLLNKLPPPPFSFNKN). Residues 340–358 (ILLTDNQPKLCSSTPRINN) show a composition bias toward polar residues. Over residues 359–391 (SPSSFSPSLSSTTPQLLVQQSPRQSPRQIPSIS) the composition is skewed to low complexity. Over residues 396 to 438 (PNNTNQPSFGHGTLQRTSTGYFSSKPLSISQPINMSKPTNMSP) the composition is skewed to polar residues. Residues 461–471 (PPLPTKPPPLT) show a composition bias toward pro residues. A compositionally biased stretch (low complexity) spans 472–498 (IPSSSSLPTTPIKQQPQQPIQQPLTPQ). Residues 509-532 (LSSSVNTANTGNCANILSPNSDRY) are compositionally biased toward polar residues. Composition is skewed to low complexity over residues 534-568 (SSRSQSSVHLSGSSSSSSSSSSSSSSSSSSSSSTS), 577-587 (KSKSSKNSPSK), and 607-624 (ITTTTTTTTTTTTTTIAT). Residues 625 to 635 (TPPPPSKPLPN) are compositionally biased toward pro residues. Polar residues predominate over residues 705-722 (KSQSSYLDNNNLPSRNTN). Residues 725–734 (NLPPRPPPLN) show a composition bias toward pro residues. 2 stretches are compositionally biased toward low complexity: residues 735-744 (IPQQQQQYKP) and 752-771 (QSPQSSLNQSLQIPLQQQQQ). Residues 785–803 (PQNTNLSGKNLQRSSTSML) are compositionally biased toward polar residues. Residues 807-817 (LPPPPFSFNKN) are compositionally biased toward pro residues.

It is found in the cytoplasm. In terms of biological role, rho GTPase-activating protein involved in the signal transduction pathway. The polypeptide is Rho GTPase-activating protein gacII (gacII) (Dictyostelium discoideum (Social amoeba)).